The sequence spans 89 residues: Dynein light chain 2, cytoplasmic (89 aa).

Belongs to the dynein light chain family.

The protein resides in the cytoplasm. Its subcellular location is the cytoskeleton. Acts as a non-catalytic accessory component of a dynein complex. This is Dynein light chain 2, cytoplasmic (Cdlc2) from Drosophila melanogaster (Fruit fly).